The primary structure comprises 426 residues: Tachykinins (426 aa).

The propeptide occupies 1-116 (MQCDFRVHQD…IEDNLSHEFE (116 aa)). Position 127 is an arginine amide (Arg127). The propeptide occupies 131–145 (GYLTPDFEDSYFRDE). Arg156 bears the Arginine amide mark. A propeptide spanning residues 160-167 (VVSDDDYY) is cleaved from the precursor. Arg178 is modified (arginine amide). A propeptide spanning residues 182–235 (SLEEVLGEIEKKAAMDYYDTRDKKTYVFEYPEDYEKRLLASIRGKLKEFPMEWE) is cleaved from the precursor. Arg246 carries the arginine amide modification. The propeptide occupies 250-259 (SLLDEIEELE). At Arg270 the chain carries Arginine amide. The propeptide occupies 274-291 (NALENYIDYYLDPDMDFD). Residues 299–329 (QGMRGKKDSDKRAPMGFQGMRGKRNTGQRFD) are disordered. At Arg302 the chain carries Arginine amide. The propeptide occupies 306 to 308 (DSD). Arg319 bears the Arginine amide mark. A propeptide spanning residues 323 to 358 (NTGQRFDTGINFNIRSSNEYQGTNNRRNALASCQLE) is cleaved from the precursor. An arginine amide mark is found at Arg369 and Arg386. The propeptide occupies 390-426 (WATAPYEDDSPFISVFDNTERIGVDGDSPAILGNSIS).

Belongs to the tachykinin family. Tachykinins (TK) are expressed throughout the nervous system. APMGFQGMR-amide is also expressed in the retrocerebral complex (at protein level).

Its subcellular location is the secreted. Functionally, tachykinins are active peptides which excite neurons, evoke behavioral responses, are potent vasodilators and secretagogues, and contract (directly or indirectly) many smooth muscles. In Camponotus floridanus (Florida carpenter ant), this protein is Tachykinins.